The following is a 71-amino-acid chain: UPF0346 protein BCE_2336 (71 aa).

This sequence belongs to the UPF0346 family.

The sequence is that of UPF0346 protein BCE_2336 from Bacillus cereus (strain ATCC 10987 / NRS 248).